Consider the following 450-residue polypeptide: Divalent metal cation transporter MntH (450 aa).

The next 11 helical transmembrane spans lie at 34–54, 61–81, 108–128, 141–161, 170–190, 212–232, 263–283, 305–325, 361–381, 383–403, and 422–442; these read LSFLGPGLLVAVGYMDPGNWI, AQYGYTLLFVILISSLSAMLL, IAIIFWIIAELAIIATDIAEV, IPLIVGALITVLDVFLLLFIM, AIVGTFIFTVLFIFIFEVYIS, GILYIALGIIGATIMPHNLYL, IQLSIAFVVNCLLLVLGASLF, PVLGATMGAIMSTLFAVALLA, SLAVIPVIVCLIIFKGNAAKI, QLLVFSQVFLSIALPFCLIPL, and VNIISWTLIIILSILNVYLIV.

The protein belongs to the NRAMP family.

The protein localises to the cell membrane. In terms of biological role, h(+)-stimulated, divalent metal cation uptake system. The chain is Divalent metal cation transporter MntH from Staphylococcus aureus (strain Mu3 / ATCC 700698).